Here is a 1253-residue protein sequence, read N- to C-terminus: Myosin heavy chain 95F (1253 aa).

The Myosin N-terminal SH3-like domain maps to 3-54; that stretch reads EDTQLVWVRDAAEGYIQGRITEIGAKEFEVTPTDRKYPKRTCHFDDIHSSCD. The 710-residue stretch at 57-766 folds into the Myosin motor domain; it reads QDHDDNCELM…KFVEFDRIMR (710 aa). 151–158 serves as a coordination point for ATP; it reads GESGAGKT. The segment at 647–666 is actin-binding; the sequence is GELMEKLEQNGTNFIRCIKP. An IQ domain is found at 808–837; the sequence is RNKCVLIAQRIARGFLARKQHRPRYQGIGK. Positions 900-1022 form a coiled coil; that stretch reads ANMNKLTVDL…LRLANESNGQ (123 aa). The tract at residues 1187-1193 is hydrophobic region; the sequence is PILLVAG. The segment at 1233–1253 is disordered; the sequence is AYKNLGAAKPNGPAAAMQKQQ.

This sequence belongs to the TRAFAC class myosin-kinesin ATPase superfamily. Myosin family. Isoform B is present at a higher level in the head and gonads than in the thoraxes. Isoform 145 kDa is found only in the head. CLIP-190 and jar are coexpressed at several times in development and in a number of tissues, including embryonic axonal neuron processes and posterior pole.

It localises to the cytoplasm. It is found in the cytoskeleton. Functionally, myosin is a protein that binds to actin and has ATPase activity that is activated by actin. Together CLIP-190 and jar may coordinate the interaction between the actin and microtubule cytoskeleton. May link endocytic vesicles to microtubules and may be involved in transport in the early embryo and in the dynamic process of dorsal closure. It is believed that its function changes during the life cycle. This Drosophila melanogaster (Fruit fly) protein is Myosin heavy chain 95F (jar).